The primary structure comprises 100 residues: Urease subunit gamma (100 aa).

It belongs to the urease gamma subunit family. In terms of assembly, heterotrimer of UreA (gamma), UreB (beta) and UreC (alpha) subunits. Three heterotrimers associate to form the active enzyme.

It localises to the cytoplasm. It catalyses the reaction urea + 2 H2O + H(+) = hydrogencarbonate + 2 NH4(+). The protein operates within nitrogen metabolism; urea degradation; CO(2) and NH(3) from urea (urease route): step 1/1. The polypeptide is Urease subunit gamma (Thioalkalivibrio sulfidiphilus (strain HL-EbGR7)).